We begin with the raw amino-acid sequence, 550 residues long: Hydroxylamine reductase (550 aa).

Cys7, Cys10, Cys19, and Cys25 together coordinate [4Fe-4S] cluster. Hybrid [4Fe-2O-2S] cluster contacts are provided by His244, Glu268, Cys312, Cys405, Cys433, Cys458, Glu493, and Lys495. The residue at position 405 (Cys405) is a Cysteine persulfide.

This sequence belongs to the HCP family. Requires [4Fe-4S] cluster as cofactor. Hybrid [4Fe-2O-2S] cluster is required as a cofactor.

It is found in the cytoplasm. It catalyses the reaction A + NH4(+) + H2O = hydroxylamine + AH2 + H(+). Catalyzes the reduction of hydroxylamine to form NH(3) and H(2)O. The sequence is that of Hydroxylamine reductase from Porphyromonas gingivalis (strain ATCC 33277 / DSM 20709 / CIP 103683 / JCM 12257 / NCTC 11834 / 2561).